The sequence spans 104 residues: L-rhamnose mutarotase (104 aa).

Tyr18 contributes to the substrate binding site. His22 (proton donor) is an active-site residue. Substrate contacts are provided by residues Tyr41 and 76–77 (WW).

This sequence belongs to the rhamnose mutarotase family. In terms of assembly, homodimer.

It is found in the cytoplasm. The catalysed reaction is alpha-L-rhamnose = beta-L-rhamnose. Its pathway is carbohydrate metabolism; L-rhamnose metabolism. Functionally, involved in the anomeric conversion of L-rhamnose. This chain is L-rhamnose mutarotase, found in Escherichia coli O1:K1 / APEC.